The following is a 92-amino-acid chain: Small ribosomal subunit protein uS19c (92 aa).

This sequence belongs to the universal ribosomal protein uS19 family.

Its subcellular location is the plastid. The protein localises to the chloroplast. Its function is as follows. Protein S19 forms a complex with S13 that binds strongly to the 16S ribosomal RNA. This is Small ribosomal subunit protein uS19c (rps19) from Marchantia polymorpha (Common liverwort).